The following is a 337-amino-acid chain: Anthranilate phosphoribosyltransferase (337 aa).

5-phospho-alpha-D-ribose 1-diphosphate is bound by residues glycine 82, 85 to 86, threonine 90, 92 to 95, 110 to 118, and threonine 122; these read GD, NIST, and KHGNRAMSS. Glycine 82 contacts anthranilate. Serine 94 is a Mg(2+) binding site. Asparagine 113 provides a ligand contact to anthranilate. Arginine 168 lines the anthranilate pocket. 2 residues coordinate Mg(2+): aspartate 226 and glutamate 227.

It belongs to the anthranilate phosphoribosyltransferase family. In terms of assembly, homodimer. Mg(2+) serves as cofactor.

It carries out the reaction N-(5-phospho-beta-D-ribosyl)anthranilate + diphosphate = 5-phospho-alpha-D-ribose 1-diphosphate + anthranilate. It participates in amino-acid biosynthesis; L-tryptophan biosynthesis; L-tryptophan from chorismate: step 2/5. Its function is as follows. Catalyzes the transfer of the phosphoribosyl group of 5-phosphorylribose-1-pyrophosphate (PRPP) to anthranilate to yield N-(5'-phosphoribosyl)-anthranilate (PRA). The polypeptide is Anthranilate phosphoribosyltransferase (Phenylobacterium zucineum (strain HLK1)).